Consider the following 228-residue polypeptide: Probable septum site-determining protein MinC (228 aa).

The protein belongs to the MinC family. Interacts with MinD and FtsZ.

Its function is as follows. Cell division inhibitor that blocks the formation of polar Z ring septums. Rapidly oscillates between the poles of the cell to destabilize FtsZ filaments that have formed before they mature into polar Z rings. Prevents FtsZ polymerization. The sequence is that of Probable septum site-determining protein MinC from Pectobacterium carotovorum subsp. carotovorum (strain PC1).